A 565-amino-acid polypeptide reads, in one-letter code: Ubiquitin carboxyl-terminal hydrolase 21 (565 aa).

2 stretches are compositionally biased toward basic and acidic residues: residues methionine 1–glutamate 14 and proline 58–arginine 70. The tract at residues methionine 1–glycine 128 is disordered. Over residues glycine 71 to proline 81 the composition is skewed to low complexity. Over residues serine 104 to serine 116 the composition is skewed to polar residues. Positions glutamate 134 to arginine 152 match the Nuclear export signal motif. Residues valine 212–methionine 558 enclose the USP domain. Cysteine 221 acts as the Nucleophile in catalysis. The tract at residues alanine 324–proline 347 is disordered. Zn(2+) is bound by residues cysteine 384, cysteine 387, cysteine 437, and cysteine 440. The active-site Proton acceptor is histidine 518.

It belongs to the peptidase C19 family. USP21 subfamily. As to quaternary structure, interacts with BEND3.

It localises to the cytoplasm. The protein resides in the nucleus. The enzyme catalyses Thiol-dependent hydrolysis of ester, thioester, amide, peptide and isopeptide bonds formed by the C-terminal Gly of ubiquitin (a 76-residue protein attached to proteins as an intracellular targeting signal).. Functionally, deubiquitinates histone H2A, a specific tag for epigenetic transcriptional repression, thereby acting as a coactivator. Deubiquitination of histone H2A releaves the repression of di- and trimethylation of histone H3 at 'Lys-4', resulting in regulation of transcriptional initiation. Regulates gene expression via histone H2A deubiquitination. Deubiquitinates BAZ2A/TIP5 leading to its stabilization. Also capable of removing NEDD8 from NEDD8 conjugates but has no effect on Sentrin-1 conjugates. Also acts as a negative regulator of the ribosome quality control (RQC) by mediating deubiquitination of 40S ribosomal proteins RPS10/eS10 and RPS20/uS10, thereby antagonizing ZNF598-mediated 40S ubiquitination. The sequence is that of Ubiquitin carboxyl-terminal hydrolase 21 (Usp21) from Rattus norvegicus (Rat).